Here is a 154-residue protein sequence, read N- to C-terminus: Ribonuclease P protein subunit p21 (154 aa).

A2 carries the N-acetylalanine modification. The Zn(2+) site is built by C62, C65, C92, and C95. Residues 112–154 (DRPEAQLGNQADSKPLQPLPNTAHSISDHLPEEKMQIQGSSDQ) form a disordered region. Residues 137–146 (ISDHLPEEKM) show a composition bias toward basic and acidic residues.

The protein belongs to the eukaryotic/archaeal RNase P protein component 4 family. In terms of assembly, RNase P consists of a catalytic RNA moiety and about 10 protein subunits; POP1, POP4, POP5, POP7, RPP14, RPP21, RPP25, RPP30, RPP38 and RPP40. Within the RNase P complex, POP1, POP7 and RPP25 form the 'finger' subcomplex, POP5, RPP14, RPP40 and homodimeric RPP30 form the 'palm' subcomplex, and RPP21, POP4 and RPP38 form the 'wrist' subcomplex. All subunits of the RNase P complex interact with the catalytic RNA.

The protein localises to the nucleus. The protein resides in the nucleolus. Functionally, component of ribonuclease P, a ribonucleoprotein complex that generates mature tRNA molecules by cleaving their 5'-ends. This Macaca mulatta (Rhesus macaque) protein is Ribonuclease P protein subunit p21 (RPP21).